A 491-amino-acid polypeptide reads, in one-letter code: uncharacterized protein (491 aa).

Residue W99 coordinates substrate. Residue N137 participates in Ca(2+) binding. H138 provides a ligand contact to substrate. Ca(2+) contacts are provided by E177 and D190. R219 is a substrate binding site. Residues D221, H225, and E245 each coordinate Ca(2+). D221 acts as the Nucleophile in catalysis. 224 to 225 (KH) is a binding site for substrate. The active-site Proton donor is the E245. Substrate-binding residues include G249, H312, and R360.

Belongs to the glycosyl hydrolase 13 family. The cofactor is Ca(2+).

The protein resides in the cytoplasm. Its subcellular location is the nucleus. This is an uncharacterized protein from Schizosaccharomyces pombe (strain 972 / ATCC 24843) (Fission yeast).